The chain runs to 270 residues: NAD kinase (270 aa).

The active-site Proton acceptor is the aspartate 63. NAD(+) contacts are provided by residues 63 to 64, 131 to 132, lysine 142, arginine 159, aspartate 161, 172 to 177, alanine 196, and glutamine 230; these read DG, NE, and TAYAMS.

This sequence belongs to the NAD kinase family. A divalent metal cation serves as cofactor.

It is found in the cytoplasm. It catalyses the reaction NAD(+) + ATP = ADP + NADP(+) + H(+). Functionally, involved in the regulation of the intracellular balance of NAD and NADP, and is a key enzyme in the biosynthesis of NADP. Catalyzes specifically the phosphorylation on 2'-hydroxyl of the adenosine moiety of NAD to yield NADP. The chain is NAD kinase from Methanoculleus marisnigri (strain ATCC 35101 / DSM 1498 / JR1).